A 245-amino-acid chain; its full sequence is Membrane-spanning 4-domains subfamily A member 15 (245 aa).

Residues 1-30 (MWERRGRGESAAGTAAVASRNASGLRPPPA) form a disordered region. Helical transmembrane passes span 78–98 (GTVQ…LLMV), 103–123 (LGML…FIIS), 147–167 (ILSA…FGVT), and 176–196 (LAVL…ATHF).

Belongs to the MS4A family.

It localises to the membrane. Functionally, may be involved in signal transduction as a component of a multimeric receptor complex. The protein is Membrane-spanning 4-domains subfamily A member 15 (Ms4a15) of Mus musculus (Mouse).